The following is a 708-amino-acid chain: Leukotoxin translocation ATP-binding protein LktB (708 aa).

A Peptidase C39 domain is found at 1-126 (MEANHQRNDL…ACYQGQLILV (126 aa)). The ABC transmembrane type-1 domain occupies 155–437 (FLETLIVSIF…LAQLWQDFQQ (283 aa)). 5 helical membrane passes run 159–179 (LIVS…FQVV), 192–212 (LNII…LSGL), 270–290 (ALTS…MWYY), 296–316 (LVIL…SPIL), and 389–409 (VMVI…LSIG). An ABC transporter domain is found at 469 to 704 (ISFKNIRFRY…SNGLYSYLHQ (236 aa)). 503–510 (GRSGSGKS) is a binding site for ATP.

Belongs to the ABC transporter superfamily. Protein-1 exporter (TC 3.A.1.109) family. Homodimer.

The protein localises to the cell inner membrane. It carries out the reaction ATP + H2O + proteinSide 1 = ADP + phosphate + proteinSide 2.. Part of the ABC transporter complex LktBD involved in leukotoxin export. Transmembrane domains (TMD) form a pore in the inner membrane and the ATP-binding domain (NBD) is responsible for energy generation. This Mannheimia haemolytica (Pasteurella haemolytica) protein is Leukotoxin translocation ATP-binding protein LktB (lktB).